We begin with the raw amino-acid sequence, 194 residues long: MREFSQIRETTETKIKLSLQLDEGKNVSVQTGVGFFDHMLTLFARHGRFGLQVEAEGDVFVDAHHTVEDVGIVLGNCLKEALQNKEGINRYGSAYVPMDESLGFVAIDISGRSYIVFQGELTNPKLGDFDTELTEEFFRAVAHAANITLHARILYGSNTHHKIEALFKAFGRALREAVERNAHITGVNSTKGML.

Belongs to the imidazoleglycerol-phosphate dehydratase family.

The protein resides in the cytoplasm. It carries out the reaction D-erythro-1-(imidazol-4-yl)glycerol 3-phosphate = 3-(imidazol-4-yl)-2-oxopropyl phosphate + H2O. Its pathway is amino-acid biosynthesis; L-histidine biosynthesis; L-histidine from 5-phospho-alpha-D-ribose 1-diphosphate: step 6/9. This is Imidazoleglycerol-phosphate dehydratase from Bacillus cereus (strain ZK / E33L).